The chain runs to 78 residues: Omega-conotoxin PnVIA (78 aa).

A signal peptide spans 1-22 (MKLTCMMIIAVLFLTAWTFVMA). Residues 23 to 45 (DDPRDEPEARDEMNPAASKLNER) constitute a propeptide that is removed on maturation. Disulfide bonds link Cys47–Cys65, Cys54–Cys69, and Cys64–Cys73. At Gln76 the chain carries Glutamine amide.

In terms of tissue distribution, expressed by the venom duct.

The protein localises to the secreted. Its function is as follows. Omega-conotoxins act at presynaptic membranes, they bind and block voltage-gated calcium channels (Cav). Acts on high voltage-activated (HVA) calcium currents in molluscan neurons. This is Omega-conotoxin PnVIA from Conus pennaceus (Feathered cone).